The chain runs to 1712 residues: Latent-transforming growth factor beta-binding protein 1 (1712 aa).

Residues 1–23 (MAGAWLRWGLLLWAGLLAWSAHG) form the signal peptide. A disordered region spans residues 65 to 118 (TAASSRALAGPPAERTRRTSQPGGAALPGLRSPLPPEPARPGGPSRQLHSKAGA). Residues 181 to 213 (TKPSCVPPCQNGGMCLRPQLCVCKPGSKGKACE) enclose the EGF-like 1 domain. 3 cysteine pairs are disulfide-bonded: Cys185/Cys195, Cys189/Cys201, and Cys203/Cys212. Asn339 and Asn370 each carry an N-linked (GlcNAc...) asparagine glycan. Residues 391–423 (RVVICHLPCMNGGQCSSRDKCQCPPNFTGKLCQ) form the EGF-like 2 domain. Disulfide bonds link Cys395/Cys405, Cys399/Cys411, Cys413/Cys422, Cys551/Cys573, Cys560/Cys586, and Cys574/Cys589. Residue Asn416 is glycosylated (N-linked (GlcNAc...) asparagine). One can recognise a TB 1 domain in the interval 549–601 (GRCFQETIGSQCGKALPGLSKQEDCCGTVGTSWGFNKCQKCPKKQSYHGYTQM). Residue Asn612 is glycosylated (N-linked (GlcNAc...) asparagine). One can recognise an EGF-like 3; calcium-binding domain in the interval 618–658 (DINECQLQGVCPNGECLNTMGSYRCSCKMGFGPDPTFSSCV). 7 cysteine pairs are disulfide-bonded: Cys622/Cys633, Cys628/Cys642, Cys644/Cys657, Cys671/Cys694, Cys681/Cys706, Cys695/Cys709, and Cys696/Cys721. Ser639 is a glycosylation site (O-linked (Glc) serine). The TB 2 domain occupies 669–721 (GPCYRLVSPGRHCMHPLSVHLTKQICCCSVGKAWGPHCEKCPLPGTAAFKEIC). The disordered stretch occupies residues 753 to 799 (NTQPVAKSTHPPPLPAKEEPVEALTSSWEHGPRGAEPEVVTAPPEKE). 2 O-linked (GalNAc...) threonine glycosylation sites follow: Thr761 and Thr793. The region spanning 865-906 (EINECTVNPDICGAGHCINLPVRYTCICYEGYKFSEQLRKCV) is the EGF-like 4; calcium-binding domain. 37 disulfides stabilise this stretch: Cys869–Cys881, Cys876–Cys890, Cys892–Cys905, Cys911–Cys923, Cys918–Cys932, Cys934–Cys947, Cys953–Cys964, Cys959–Cys973, Cys976–Cys988, Cys994–Cys1005, Cys1000–Cys1014, Cys1017–Cys1028, Cys1034–Cys1045, Cys1040–Cys1054, Cys1056–Cys1069, Cys1075–Cys1086, Cys1081–Cys1095, Cys1097–Cys1110, Cys1116–Cys1127, Cys1122–Cys1136, Cys1138–Cys1151, Cys1157–Cys1169, Cys1164–Cys1178, Cys1180–Cys1192, Cys1198–Cys1210, Cys1204–Cys1219, Cys1221–Cys1234, Cys1240–Cys1252, Cys1246–Cys1261, Cys1263–Cys1276, Cys1282–Cys1294, Cys1289–Cys1303, Cys1305–Cys1319, Cys1340–Cys1363, Cys1350–Cys1375, Cys1364–Cys1380, and Cys1365–Cys1392. The region spanning 907–948 (DIDECAQVRHLCSQGRCENTEGSFLCVCPAGFMASEEGTNCI) is the EGF-like 5; calcium-binding domain. The O-linked (Glc) serine glycan is linked to Ser929. The EGF-like 6; calcium-binding domain maps to 949–989 (DVDECLRPDMCRDGRCINTAGAFRCEYCDSGYRMSRRGYCE). Asn966 is subject to (3R)-3-hydroxyasparagine. An EGF-like 7; calcium-binding domain is found at 990–1029 (DIDECLKPSTCPEEQCVNTPGSYQCVPCTEGFRGWNGQCL). Ser1011 is a glycosylation site (O-linked (Glc) serine). In terms of domain architecture, EGF-like 8; calcium-binding spans 1030–1070 (DVDECLQPKVCTNGSCTNLEGSYMCSCHRGYSPTPDHRHCQ). A glycan (N-linked (GlcNAc...) asparagine) is linked at Asn1042. The O-linked (Glc) serine glycan is linked to Ser1051. The region spanning 1071–1111 (DIDECQQGNLCMNGQCRNTDGSFRCTCGQGYQLSAAKDQCE) is the EGF-like 9; calcium-binding domain. Positions 1112–1152 (DIDECEHHHLCSHGQCRNTEGSFQCVCNQGYRASVLGDHCE) constitute an EGF-like 10; calcium-binding domain. Asn1129 carries the post-translational modification (3R)-3-hydroxyasparagine. A glycan (O-linked (Glc) serine) is linked at Ser1133. An EGF-like 11; calcium-binding domain is found at 1153–1193 (DINECLEDSSVCQGGDCINTAGSYDCTCPDGFQLNDNKGCQ). In terms of domain architecture, EGF-like 12; calcium-binding spans 1194-1235 (DINECAQPGLCGSHGECLNTQGSFHCVCEQGFSISADGRTCE). The O-linked (Glc) serine glycan is linked to Ser1216. The region spanning 1236 to 1277 (DIDECVNNTVCDSHGFCDNTAGSFRCLCYQGFQAPQDGQGCV) is the EGF-like 13; calcium-binding domain. A glycan (N-linked (GlcNAc...) asparagine) is linked at Asn1242. An EGF-like 14; calcium-binding domain is found at 1278 to 1320 (DVNECELLSGVCGEAFCENVEGSFLCVCADENQEYSPMTGQCR). An 8-Cys3 region region spans residues 1335 to 1402 (EEKKECYYNL…PRGKGLVPAG (68 aa)). The TB 3 domain maps to 1338–1392 (KECYYNLNDASLCDNVLAPNVTKQECCCTSGAGWGDNCEIFPCPVQGTAEFTEMC). Asn1357 carries an N-linked (GlcNAc...) asparagine glycan. Ser1405 bears the Phosphoserine mark. In terms of domain architecture, EGF-like 15; calcium-binding spans 1415 to 1457 (DADECLLFGEEICKNGYCLNTQPGYECYCKQGTYYDPVKLQCF). Disulfide bonds link Cys1419-Cys1432, Cys1427-Cys1441, Cys1443-Cys1456, Cys1462-Cys1473, Cys1468-Cys1482, Cys1484-Cys1497, Cys1517-Cys1541, Cys1527-Cys1553, Cys1542-Cys1556, and Cys1543-Cys1568. The EGF-like 16; calcium-binding domain maps to 1458 to 1498 (DMDECQDPNSCIDGQCVNTEGSYNCFCTHPMVLDASEKRCV). Ser1479 is a glycosylation site (O-linked (Glc) serine). A C-terminal domain region spans residues 1498–1712 (VQPTESNEQI…LNLDKESDLE (215 aa)). The region spanning 1515 to 1568 (DLCWEHLSEEYVCSRPLVGKQTTYTECCCLYGEAWGMQCALCPMKDSDDYAQLC) is the TB 4 domain. Phosphoserine occurs at positions 1588 and 1607. The EGF-like 17 domain maps to 1612-1652 (QAEECGILNGCENGRCVRVQEGYTCDCFDGYHLDMAKMTCV). Intrachain disulfides connect Cys1616–Cys1627, Cys1622–Cys1636, Cys1638–Cys1651, Cys1657–Cys1672, Cys1667–Cys1681, and Cys1683–Cys1696. The EGF-like 18; calcium-binding domain maps to 1653–1697 (DVNECSELNNRMSLCKNAKCINTEGSYKCLCLPGYIPSDKPNYCT). Ser1678 carries O-linked (Glc) serine glycosylation.

Belongs to the LTBP family. Interacts with TGFB1; associates via disulfide bonds with the Latency-associated peptide chain (LAP) regulatory chain of TGFB1, leading to regulate activation of TGF-beta-1. LTBP1 does not bind directly to TGF-beta-1, the active chain of TGFB1. Interacts (via C-terminal domain) with FBN1 (via N-terminal domain). Interacts with FBN2. Interacts with ADAMTSL2. Interacts with EFEMP2. Contains hydroxylated asparagine residues. In terms of processing, two intrachain disulfide bonds from the TB3 domain are rearranged upon TGFB1 binding, and form interchain bonds with TGFB1 propeptide, anchoring it to the extracellular matrix. Post-translationally, O-glycosylated on serine residues by POGLUT2 and POGLUT3.

The protein localises to the secreted. It is found in the extracellular space. Its subcellular location is the extracellular matrix. Key regulator of transforming growth factor beta (TGFB1, TGFB2 and TGFB3) that controls TGF-beta activation by maintaining it in a latent state during storage in extracellular space. Associates specifically via disulfide bonds with the Latency-associated peptide (LAP), which is the regulatory chain of TGF-beta, and regulates integrin-dependent activation of TGF-beta. Outcompeted by LRRC32/GARP for binding to LAP regulatory chain of TGF-beta. This is Latent-transforming growth factor beta-binding protein 1 from Mus musculus (Mouse).